Reading from the N-terminus, the 259-residue chain is UPF0246 protein PA14_18590 (259 aa).

Belongs to the UPF0246 family.

This is UPF0246 protein PA14_18590 from Pseudomonas aeruginosa (strain UCBPP-PA14).